The chain runs to 407 residues: Argininosuccinate synthase (407 aa).

ATP-binding positions include 11 to 19 (AYSGGLDTS) and A38. 2 residues coordinate L-citrulline: Y89 and S94. ATP is bound at residue G119. 3 residues coordinate L-aspartate: T121, N125, and D126. N125 serves as a coordination point for L-citrulline. Residues R129, S180, S189, E265, and Y277 each contribute to the L-citrulline site.

This sequence belongs to the argininosuccinate synthase family. Type 1 subfamily. In terms of assembly, homotetramer.

It is found in the cytoplasm. The catalysed reaction is L-citrulline + L-aspartate + ATP = 2-(N(omega)-L-arginino)succinate + AMP + diphosphate + H(+). It functions in the pathway amino-acid biosynthesis; L-arginine biosynthesis; L-arginine from L-ornithine and carbamoyl phosphate: step 2/3. In Magnetococcus marinus (strain ATCC BAA-1437 / JCM 17883 / MC-1), this protein is Argininosuccinate synthase.